Consider the following 59-residue polypeptide: Potassium channel toxin alpha-KTx 3.5 (59 aa).

A signal peptide spans 1–22; sequence MKVFSAVLIILFVCSMIIGINA. Cystine bridges form between Cys-29-Cys-49, Cys-35-Cys-54, and Cys-39-Cys-56. Residues 47-54 are interaction with Ca(2+)-activated K(+) channels; that stretch reads GKCMNGKC.

This sequence belongs to the short scorpion toxin superfamily. Potassium channel inhibitor family. Alpha-KTx 03 subfamily. In terms of tissue distribution, expressed by the venom gland.

It is found in the secreted. Has also been shown to inhibit with high potency Kv1.3/KCNA3 and with low potency Kv1.1/KCNA1 and Kv1.2/KCNA2 voltage-gated potassium channels. Also binds and inhibits the molluscan calcium-activated potassium channels KCa (Kd=135 nM). The sequence is that of Potassium channel toxin alpha-KTx 3.5 (KTX2) from Androctonus australis (Sahara scorpion).